The chain runs to 76 residues: Brevinin-2ISa (76 aa).

Positions 1–22 are cleaved as a signal peptide; the sequence is MFNMKKSLLLLFFLGTISLSLC. A propeptide spans 23 to 41 (removed in mature form); that stretch reads EEERDADEDDGVEMTEEEV. A disulfide bridge connects residues Cys-70 and Cys-76.

As to expression, expressed by the skin glands.

The protein localises to the secreted. Its function is as follows. Has antimicrobial activity against Gram-negative bacterium E.coli ATCC 8739 (MIC=50 ug), against Gram positive bacteria S.aureus ATCC 6538 (MIC=12.5 ug), methicillin-resistant S.aureus ATCC 43300 (MIC=100 ug) and B.subtilis ATCC 6633 (MIC=12.5 ug). Has no activity against fungus C.albicans ATCC 90028. This chain is Brevinin-2ISa, found in Odorrana ishikawae (Ishikawa's frog).